The following is a 670-amino-acid chain: DNA ligase (670 aa).

NAD(+) contacts are provided by residues 32 to 36 (DSEYD), 81 to 82 (SL), and Glu114. Catalysis depends on Lys116, which acts as the N6-AMP-lysine intermediate. The NAD(+) site is built by Arg137, Glu174, Lys291, and Lys315. 4 residues coordinate Zn(2+): Cys409, Cys412, Cys427, and Cys433. The BRCT domain maps to 592 to 670 (ASENLFKDKT…EEEFLAQITR (79 aa)).

Belongs to the NAD-dependent DNA ligase family. LigA subfamily. It depends on Mg(2+) as a cofactor. The cofactor is Mn(2+).

It carries out the reaction NAD(+) + (deoxyribonucleotide)n-3'-hydroxyl + 5'-phospho-(deoxyribonucleotide)m = (deoxyribonucleotide)n+m + AMP + beta-nicotinamide D-nucleotide.. Functionally, DNA ligase that catalyzes the formation of phosphodiester linkages between 5'-phosphoryl and 3'-hydroxyl groups in double-stranded DNA using NAD as a coenzyme and as the energy source for the reaction. It is essential for DNA replication and repair of damaged DNA. The polypeptide is DNA ligase (Haemophilus influenzae (strain PittGG)).